The following is a 585-amino-acid chain: Arginine--tRNA ligase (585 aa).

The short motif at 131 to 141 is the 'HIGH' region element; sequence ANPTGPMHVGH.

It belongs to the class-I aminoacyl-tRNA synthetase family. As to quaternary structure, monomer.

Its subcellular location is the cytoplasm. The catalysed reaction is tRNA(Arg) + L-arginine + ATP = L-arginyl-tRNA(Arg) + AMP + diphosphate. This chain is Arginine--tRNA ligase, found in Agrobacterium fabrum (strain C58 / ATCC 33970) (Agrobacterium tumefaciens (strain C58)).